Here is a 370-residue protein sequence, read N- to C-terminus: A-type ATP synthase subunit C (370 aa).

This sequence belongs to the V-ATPase V0D/AC39 subunit family. In terms of assembly, has multiple subunits with at least A(3), B(3), C, D, E, F, H, I and proteolipid K(x).

It is found in the cell membrane. Functionally, component of the A-type ATP synthase that produces ATP from ADP in the presence of a proton gradient across the membrane. This chain is A-type ATP synthase subunit C, found in Pyrococcus abyssi (strain GE5 / Orsay).